Consider the following 408-residue polypeptide: PCI domain-containing protein 2 (408 aa).

Alanine 2 is subject to N-acetylalanine. At serine 45 the chain carries Phosphoserine. The 191-residue stretch at 210 to 400 (VTYRYYVGRK…QKLVVSKQNP (191 aa)) folds into the PCI domain.

The protein belongs to the CSN12 family. In terms of assembly, component of the nuclear pore complex (NPC)-associated TREX-2 complex (transcription and export complex 2), composed of at least GANP, 2 copies of ENY2, PCID2, SEM1/DSS1, and either centrin CETN2 or centrin CETN3. The TREX-2 complex also associates with ALYREF/ALY and with the nucleoporin NUP153. Interacts with BRCA2. Interacts with SRCAP chromatin remodeling complex component ZNHIT1; the interaction results in inhibition of SRCAP complex activity, preventing the deposition of histone variant H2AZ1/H2A.Z to lymphoid fate regulator genes and restricting lymphoid lineage commitment.

It is found in the cytoplasm. It localises to the nucleus. Its subcellular location is the nuclear pore complex. In terms of biological role, required for B-cell survival through the regulation of the expression of cell-cycle checkpoint MAD2L1 protein during B cell differentiation. As a component of the TREX-2 complex, involved in the export of mRNAs to the cytoplasm through the nuclear pores. Binds and stabilizes BRCA2 and is thus involved in the control of R-loop-associated DNA damage and transcription-associated genomic instability. Blocks the activity of the SRCAP chromatin remodeling complex by interacting with SRCAP complex member ZNHIT1 and inhibiting its interaction with the complex. This prevents the deposition of histone variant H2AZ1/H2A.Z at the nucleosomes of key lymphoid fate regulator genes which suppresses their expression and restricts lymphoid lineage commitment. The protein is PCI domain-containing protein 2 (PCID2) of Bos taurus (Bovine).